We begin with the raw amino-acid sequence, 62 residues long: Omega-lycotoxin-Am1e (62 aa).

A propeptide spanning residues 1–15 is cleaved from the precursor; that stretch reads EDEVEETLPVAEEGR. Disulfide bonds link cysteine 19-cysteine 34, cysteine 26-cysteine 39, cysteine 33-cysteine 59, and cysteine 41-cysteine 57.

Belongs to the neurotoxin omega-lctx family. In terms of tissue distribution, expressed by the venom gland.

Its subcellular location is the secreted. In terms of biological role, modulates Cav2.1/CACNA1A voltage-gated calcium channels (P/Q-type currents) in rat cerebellar Purkinje cells and hippocampal CA1-CA3 neurons. At saturating concentrations (&gt;10 nM) decelerates activation kinetics and slightly increases peak amplitude without affecting deactivation kinetics. In vivo, does not cause death when intravenously injected into mice. In rat models, through its activity on Cav2.1/CACNA1A, has an ameliorative effect on memory defects provoked by hyperstimulation of N-methyl-D-aspartate receptors (NMDARs) in the hippocampus. The chain is Omega-lycotoxin-Am1e from Alopecosa marikovskyi (Wolf spider).